A 297-amino-acid chain; its full sequence is MTSGANSSGSYLPSEIRSSKIDDNYLKELNEDLKLRKQELLEMLKPLEDKNNLLFQKLMSNLEEKQRSLQIMRQIMAGKGCEESSVMELLKEAEEMKQNLERKNKMLRKEMEMLWNKTFEAEELSDQQKAPQTKNKADLQDGKAPKSPSSPRKTESELEKSFAEKVKEIRKEKQQRKMEWVKYQEQNNILQNDFHGKVIELRIEALKNYQKANDLKLSLYLQQNFEPMQAFLNLPGSQGTMGITTMDRVTTGRNEHHVRILGTKIYTEQQGTKGSQLDNTGGRLFFLRSLPDEALKN.

Residues 83 to 117 (ESSVMELLKEAEEMKQNLERKNKMLRKEMEMLWNK) adopt a coiled-coil conformation. A disordered region spans residues 122 to 161 (EELSDQQKAPQTKNKADLQDGKAPKSPSSPRKTESELEKS). Basic and acidic residues-rich tracts occupy residues 135–144 (NKADLQDGKA) and 152–161 (RKTESELEKS).

This chain is Coiled-coil domain-containing protein 196, found in Homo sapiens (Human).